A 377-amino-acid polypeptide reads, in one-letter code: Flagellin C (377 aa).

Coiled-coil stretches lie at residues 103–129 and 301–340; these read SNSKADRVAIQEEITALNDELNRVAET and VDSHRAELGAFQNRFNHAINNLDNINENVNASKSRIKDTD.

Belongs to the bacterial flagellin family. In terms of assembly, heteromer of multiple flagellin subunits including FlaA, FlaB, FlaC, FlaD and FlaE.

The protein resides in the secreted. Its subcellular location is the bacterial flagellum. Functionally, flagellin is the subunit protein which polymerizes to form the filaments of bacterial flagella. FlaC is not essential for flagellar synthesis and motility. The polypeptide is Flagellin C (flaC) (Vibrio cholerae serotype O1 (strain ATCC 39541 / Classical Ogawa 395 / O395)).